We begin with the raw amino-acid sequence, 570 residues long: Mitoguardin 1 (570 aa).

A helical transmembrane segment spans residues 34–54 (GLKKIIAVAAISGVSLIFLAC).

The protein belongs to the mitoguardin family. As to quaternary structure, homodimer and heterodimer; forms heterodimers with miga2.

The protein localises to the mitochondrion outer membrane. In terms of biological role, regulator of mitochondrial fusion: acts by forming homo- and heterodimers at the mitochondrial outer membrane and facilitating the formation of pld6/MitoPLD dimers. May act by regulating phospholipid metabolism via pld6/MitoPLD. This is Mitoguardin 1 from Xenopus laevis (African clawed frog).